The primary structure comprises 440 residues: KH domain-containing protein 3 (440 aa).

Residues 1–39 (MASLKRFQTLVPLDHKQGTLFEIIGEPKLPKWFHVECLE) are involved in RNA binding. The KH; atypical domain maps to 40 to 118 (DPKRLYVEPR…CRMKLMEIEA (79 aa)). The interval 132 to 201 (KAATQPAPVK…EVREAATEQA (70 aa)) is disordered. Ser151 is subject to Phosphoserine; by ATR. Residues Thr274 and Thr286 each carry the phosphothreonine modification. Positions 341–440 (VREAATQLSP…RDAWESFIIL (100 aa)) are required for interaction with NUMA1 and regulation of apoptosis in response to DNA damage. Ser349 is modified (phosphoserine).

It belongs to the KHDC1 family. In terms of assembly, component of the subcortical maternal complex (SCMC), at least composed of NLRP5, KHDC3, OOEP, and TLE6. Within the complex, interacts with NLRP5, OOEP and TLE6. The SCMC may facilitate translocation of its components between the nuclear and cytoplasmic compartments. Forms a scaffold complex with OOEP/FLOPED, and interacts with BLM and TRIM25 at DNA replication forks. Interacts with PARP1; the interaction is increased following the formation of DNA double-strand breaks. Interacts (via C-terminus) with NUMA1. Post-translationally, phosphorylation at Ser-151 is required to promote stalled fork restart. In terms of tissue distribution, detected in ovary, but not in testis or somatic tissues. In the ovary, expressed in growing oocytes.

The protein localises to the cytoplasm. Its subcellular location is the cell cortex. The protein resides in the nucleus. It localises to the mitochondrion. It is found in the cytoskeleton. The protein localises to the microtubule organizing center. Its subcellular location is the centrosome. The protein resides in the chromosome. Its function is as follows. Component of the subcortical maternal complex (SCMC), a multiprotein complex that plays a key role in early embryonic development. The SCMC complex is a structural constituent of cytoplasmic lattices, which consist in fibrous structures found in the cytoplasm of oocytes and preimplantation embryos. They are required to store maternal proteins critical for embryonic development, such as proteins that control epigenetic reprogramming of the preimplantation embryo, and prevent their degradation or activation. KHDC3 ensures proper spindle assembly by regulating the localization of AURKA via RHOA signaling and of PLK1 via a RHOA-independent process. Required for the localization of MAD2L1 to kinetochores to enable spindle assembly checkpoint function. As part of the OOEP-KHDC3 scaffold, recruits BLM and TRIM25 to DNA replication forks, thereby promoting the ubiquitination of BLM by TRIM25, enhancing BLM retainment at replication forks and therefore promoting stalled replication fork restart. Regulates homologous recombination-mediated DNA repair via recruitment of RAD51 to sites of DNA double-strand breaks, and sustainment of PARP1 activity, which in turn modulates downstream ATM or ATR activation. Activation of ATM or ATR in response to DNA double-strand breaks may be cell-type specific. Its role in DNA double-strand break repair is independent of its role in restarting stalled replication forks. Promotes neural stem cell neurogenesis and neuronal differentiation in the hippocampus. May regulate normal development of learning, memory and anxiety. Capable of binding RNA. This chain is KH domain-containing protein 3, found in Mus musculus (Mouse).